The sequence spans 182 residues: Isopentenyl-diphosphate Delta-isomerase (182 aa).

Residues histidine 25 and histidine 32 each contribute to the Mn(2+) site. A Nudix hydrolase domain is found at proline 30–methionine 164. The active site involves cysteine 67. Histidine 69 serves as a coordination point for Mn(2+). Glutamate 87 contributes to the Mg(2+) binding site. Residues glutamate 114 and glutamate 116 each contribute to the Mn(2+) site. Glutamate 116 is a catalytic residue.

This sequence belongs to the IPP isomerase type 1 family. As to quaternary structure, homodimer. Requires Mg(2+) as cofactor. It depends on Mn(2+) as a cofactor.

It localises to the cytoplasm. The catalysed reaction is isopentenyl diphosphate = dimethylallyl diphosphate. It participates in isoprenoid biosynthesis; dimethylallyl diphosphate biosynthesis; dimethylallyl diphosphate from isopentenyl diphosphate: step 1/1. Its function is as follows. Catalyzes the 1,3-allylic rearrangement of the homoallylic substrate isopentenyl (IPP) to its highly electrophilic allylic isomer, dimethylallyl diphosphate (DMAPP). This chain is Isopentenyl-diphosphate Delta-isomerase, found in Salmonella arizonae (strain ATCC BAA-731 / CDC346-86 / RSK2980).